The primary structure comprises 175 residues: uncharacterized protein (175 aa).

The first 23 residues, 1–23, serve as a signal peptide directing secretion; the sequence is MILVLLLILIAFLYIYFPSSLNQ.

This is an uncharacterized protein from Invertebrate iridescent virus 6 (IIV-6).